The following is a 932-amino-acid chain: Protocadherin gamma-A12 (932 aa).

A signal peptide spans 1-29; it reads MIPARLHRDYKGLVLLGILLGTLWETGCT. Cadherin domains follow at residues 30–133, 134–242, 243–347, 348–452, 453–562, and 570–683; these read QIRY…APYF, RESE…APAF, AQPE…APEV, VLTS…PPVF, PQAS…APEI, and DGST…SPAN. At 30 to 692 the chain is on the extracellular side; that stretch reads QIRYSVPEEL…NSETSDLTLY (663 aa). Residues Asn-265, Asn-419, and Asn-545 are each glycosylated (N-linked (GlcNAc...) asparagine). Residues 693–713 traverse the membrane as a helical segment; sequence LVVAVAAVSCVFLAFVILLLA. The Cytoplasmic portion of the chain corresponds to 714 to 932; sequence LRLRRWHKSR…KKKSGKKEKK (219 aa). Disordered stretches follow at residues 803 to 841 and 902 to 932; these read GHGL…WPNN and ATLT…KEKK. The segment covering 816-841 has biased composition (polar residues); the sequence is WRFSQAQRPGTSGSQNGDDTGTWPNN. A compositionally biased stretch (basic residues) spans 922 to 932; sequence NKKKSGKKEKK.

It is found in the cell membrane. In terms of biological role, potential calcium-dependent cell-adhesion protein. May be involved in the establishment and maintenance of specific neuronal connections in the brain. In Pan troglodytes (Chimpanzee), this protein is Protocadherin gamma-A12 (PCDHGA12).